A 952-amino-acid chain; its full sequence is Meiotic coiled-coil protein 3 (952 aa).

3 coiled-coil regions span residues 283-611 (QLLQ…KEHL), 684-716 (TKKFVQKDQEYQTKEIELRNYKITLQSLLEDKL), and 839-942 (SLEN…RERE).

The protein localises to the cytoplasm. Functionally, has a role in meiosis. This is Meiotic coiled-coil protein 3 (mcp3) from Schizosaccharomyces pombe (strain 972 / ATCC 24843) (Fission yeast).